We begin with the raw amino-acid sequence, 59 residues long: Conotoxin Cl14.4 (59 aa).

An N-terminal signal peptide occupies residues 1 to 19; sequence MKFLLFLSVALLLTSFIET. Residues 20–36 constitute a propeptide that is removed on maturation; sequence VTVNKAGMERPSRALVG. Isoleucine 58 bears the Isoleucine amide mark.

Post-translationally, contains 2 disulfide bonds. As to expression, expressed by the venom duct.

The protein resides in the secreted. The sequence is that of Conotoxin Cl14.4 from Californiconus californicus (California cone).